We begin with the raw amino-acid sequence, 29 residues long: Beta-hexatoxin-Mr1a (29 aa).

3 disulfide bridges follow: Cys2–Cys16, Cys9–Cys21, and Cys15–Cys26.

This sequence belongs to the neurotoxin 15 family. 01 (magi-5) subfamily. Expressed by the venom gland.

Its subcellular location is the secreted. In terms of biological role, insect and vertebrate active toxin. Binds at site 4 of mammalian voltage-gated sodium channels and shifts the activation voltage of the mammalian rNav1.2a (SCN2A) channel to more hyperpolarized voltages, whereas the insect channel, DmNav1 (para), is not affected. Causes temporary paralysis when injected into lepidopteran larvae at 8.6 nmol/g. A low intracranial injection dose into mice causes lacrimation, closure of the eyes and sweating. A high injection dose causes extensive lacrimation and death. The sequence is that of Beta-hexatoxin-Mr1a from Macrothele raveni (Funnel-web spider).